A 346-amino-acid polypeptide reads, in one-letter code: Trans-enoyl reductase FFUJ_12240 (346 aa).

40 to 43 contributes to the NADP(+) binding site; that stretch reads HDAK. Residue 124–131 participates in substrate binding; sequence LAIATAGL. NADP(+)-binding positions include 157–160, 180–183, Tyr-198, and 245–246; these read ATAT, SPSN, and LE. Residue 266–270 participates in substrate binding; sequence APSIL. 335-336 is a binding site for NADP(+); that stretch reads VH.

Belongs to the zinc-containing alcohol dehydrogenase family.

Functionally, trans-enoyl reductase; part of the gene cluster that mediates the biosynthesis of fujikurins A-D, secondary metabolites playing a role during rice infection. The polyketide synthase PKS19 acts with the trans-enoyl reductase FFUJ_12240 and the polyketide transferase FFUJ_12241 to produce fujikurins, however, the biosynthesis pathway has not been identified yet. The chain is Trans-enoyl reductase FFUJ_12240 from Gibberella fujikuroi (strain CBS 195.34 / IMI 58289 / NRRL A-6831) (Bakanae and foot rot disease fungus).